Consider the following 336-residue polypeptide: DNA-directed RNA polymerase subunit alpha (336 aa).

The segment at 1–232 (MIQKNWQELI…DQLGVFVNFD (232 aa)) is alpha N-terminal domain (alpha-NTD). Residues 248–336 (FNPALLKKVD…DLAKRYEDQY (89 aa)) are alpha C-terminal domain (alpha-CTD).

This sequence belongs to the RNA polymerase alpha chain family. In terms of assembly, homodimer. The RNAP catalytic core consists of 2 alpha, 1 beta, 1 beta' and 1 omega subunit. When a sigma factor is associated with the core the holoenzyme is formed, which can initiate transcription.

It carries out the reaction RNA(n) + a ribonucleoside 5'-triphosphate = RNA(n+1) + diphosphate. In terms of biological role, DNA-dependent RNA polymerase catalyzes the transcription of DNA into RNA using the four ribonucleoside triphosphates as substrates. This chain is DNA-directed RNA polymerase subunit alpha, found in Rhizobium radiobacter (Agrobacterium tumefaciens).